A 132-amino-acid chain; its full sequence is TGSCCGPTFSSLSCGGGCLQPRYYRDPCCCRPVSCQTTVSRPVTFVSRCTRPICEPCRRPVCCDPCSLQEGCCRPITCCPTSCQAVVCRPCCWATTCCQPVSVQCPCCRPTSCQPAPCSRTTCRTFRTSPCC.

Functionally, the keratin products of mammalian epidermal derivatives such as wool and hair consist of microfibrils embedded in a rigid matrix of other proteins. The matrix proteins include the high-sulfur and high-tyrosine keratins, having molecular weights of 6-20 kDa, whereas the microfibrils contain the larger, low-sulfur keratins (40-56 kDa). The chain is Keratin, high-sulfur matrix protein, IIIA3 from Capra hircus (Goat).